Reading from the N-terminus, the 968-residue chain is RNA polymerase-associated protein RapA (968 aa).

A Helicase ATP-binding domain is found at 164–334 (DVGRRHAPRV…FARLRLLDPN (171 aa)). Position 177–184 (177–184 (DEVGLGKT)) interacts with ATP. A DEAH box motif is present at residues 280-283 (DEAH). Positions 490 to 644 (RVEWLMGYLT…TCPTGRTVYD (155 aa)) constitute a Helicase C-terminal domain.

Belongs to the SNF2/RAD54 helicase family. RapA subfamily. In terms of assembly, interacts with the RNAP. Has a higher affinity for the core RNAP than for the holoenzyme. Its ATPase activity is stimulated by binding to RNAP.

Functionally, transcription regulator that activates transcription by stimulating RNA polymerase (RNAP) recycling in case of stress conditions such as supercoiled DNA or high salt concentrations. Probably acts by releasing the RNAP, when it is trapped or immobilized on tightly supercoiled DNA. Does not activate transcription on linear DNA. Probably not involved in DNA repair. The chain is RNA polymerase-associated protein RapA from Klebsiella pneumoniae subsp. pneumoniae (strain ATCC 700721 / MGH 78578).